Here is a 732-residue protein sequence, read N- to C-terminus: Coagulation factor XIII A chain (732 aa).

The tract at residues 1–26 is disordered; that stretch reads MSDTPASTFGGRRAVPPNNSNAAEVD. Residue Ser2 is modified to N-acetylserine. Positions 2 to 38 are cleaved as a propeptide — activation peptide; sequence SDTPASTFGGRRAVPPNNSNAAEVDLPTEELQGLVPR. Active-site residues include Cys315, His374, and Asp397. Residues Asn437, Asp439, Glu486, and Glu491 each contribute to the Ca(2+) site. A glycan (N-linked (GlcNAc...) asparagine) is linked at Asn614.

This sequence belongs to the transglutaminase superfamily. Transglutaminase family. Tetramer of two A chains (F13A1) and two B (F13B) chains. Ca(2+) serves as cofactor. The activation peptide is released by thrombin.

The protein localises to the cytoplasm. Its subcellular location is the secreted. It catalyses the reaction L-glutaminyl-[protein] + L-lysyl-[protein] = [protein]-L-lysyl-N(6)-5-L-glutamyl-[protein] + NH4(+). Factor XIII is activated by thrombin and calcium ion to a transglutaminase that catalyzes the formation of gamma-glutamyl-epsilon-lysine cross-links between fibrin chains, thus stabilizing the fibrin clot. Also cross-link alpha-2-plasmin inhibitor, or fibronectin, to the alpha chains of fibrin. The protein is Coagulation factor XIII A chain (F13a1) of Mus musculus (Mouse).